A 208-amino-acid polypeptide reads, in one-letter code: Exosome complex component CSL4 homolog (208 aa).

As to quaternary structure, component of the RNA exosome complex. Ubiquitously expressed.

The protein localises to the nucleus. It is found in the nucleolus. It localises to the nucleoplasm. Its function is as follows. Non-catalytic component of the RNA exosome complex which has 3'-&gt;5' exoribonuclease activity and participates in a multitude of cellular RNA processing and degradation events. Involved in regulation of antisense ribosomal siRNA production. Involved in response to cold-warm shock. This chain is Exosome complex component CSL4 homolog, found in Caenorhabditis elegans.